Here is a 534-residue protein sequence, read N- to C-terminus: MASSSIASFAPFESYSPPLNTSETSLISVQLTQDGLDYHGALAFLCGALLFGFVYSVFYNLYLSPIARVPGPLIAQVSPLWLMRAVCRKQLNCDIKKLHEKYGKKPERSPVVRLSPTEVSFATVEAQNAIHRPGASAKQGLFFTKEGTLEAMMGEIIWPATNLLTATVPEEHQRLKKALQPAFTEKALQLQEPIQQQHTDRLIRSVQEASRQNRVVDLTPHMSQAIWDIISDLSFGEPLLKDQLAKFERLKTTFCMVSPLLEALQVLLAVPGAQTLAKACVGLVPLLFWLPTNVLPSAQLRKRFERQDSNEDFLTAIMRCREMGIQMTDMELQSNASLLVMVGYDTTATSLSATMNLLLRHPLCLQALQDELHSHFSSTSDMTSKPLSQLPILNGCIQESLRLFPPANGKGTNRTSPGTMIDGVYIPRGVNVSADMYTIQRSPTYWSRPNEFCPDRWFDNGPGTEFAQDVRSSHNPFLLGPRMCIGRAVALQSMRMLIAKLVYTFDLEAVEDYSWDLHVANSYLWTGYRCNARV.

Residue Asn20 is glycosylated (N-linked (GlcNAc...) asparagine). Residues 41–61 (ALAFLCGALLFGFVYSVFYNL) traverse the membrane as a helical segment. Asn335, Asn413, and Asn431 each carry an N-linked (GlcNAc...) asparagine glycan. Cys484 lines the heme pocket.

This sequence belongs to the cytochrome P450 family. The cofactor is heme.

The protein resides in the membrane. The protein operates within secondary metabolite biosynthesis; terpenoid biosynthesis. In terms of biological role, cytochrome P4590 monooxygenase part of the gene cluster that mediates the biosynthesis of betaestacins. The bifunctional terpene synthase btcA converts isopentenyl diphosphate (IPP) and dimethylallyl diphosphate (DMAPP) into the sesterterpene betaestacin I. The C-terminal prenyltransferase (PT) domain of btcA catalyzes formation of GFPP, whereas the N-terminal terpene cyclase (TC) domain catalyzes the cyclization of GFPP into betaestacin I. The cytochrome P450 monooxygenase btcB oxidizes the C25 methyl group of betaestacin I to yield the carboxylic acid betaestacin IV via the alcohol betaestacin III. The cytochrome P450 monooxygenase btcC further catalyzes the multistep oxidation of betaestacin IV to produce several compounds, including betaestacins Va, Vb, Vc and VI. The polypeptide is Cytochrome P450 monooxygenase btcB (Colletotrichum orbiculare (strain 104-T / ATCC 96160 / CBS 514.97 / LARS 414 / MAFF 240422) (Cucumber anthracnose fungus)).